Here is a 277-residue protein sequence, read N- to C-terminus: Putative thiosulfate sulfurtransferase (277 aa).

Rhodanese domains lie at 18 to 125 (HAPK…PLSS) and 154 to 274 (AINV…APIE). Catalysis depends on Cys-233, which acts as the Cysteine persulfide intermediate. Substrate is bound at residue Arg-238.

The enzyme catalyses thiosulfate + hydrogen cyanide = thiocyanate + sulfite + 2 H(+). In terms of biological role, may be a sulfotransferase involved in the formation of thiosulfate. This Mycobacterium tuberculosis (strain CDC 1551 / Oshkosh) protein is Putative thiosulfate sulfurtransferase (cysA1).